A 1316-amino-acid chain; its full sequence is Myosin-5 (1316 aa).

The span at 1 to 12 (MAIVKRGGRTKT) shows a compositional bias: basic residues. Positions 1 to 29 (MAIVKRGGRTKTKQQQVPAKSSGGGSSGG) are disordered. A Myosin motor domain is found at 43-731 (VGVSDLTLLS…TLFALEDMRD (689 aa)). Position 136–143 (136–143 (GESGAGKT)) interacts with ATP. Serine 366 bears the Phosphoserine mark. Residues 414-497 (SIGILDIYGF…PGLFAALNDS (84 aa)) are actin-binding. 2 consecutive IQ domains span residues 735–755 (HNMA…KEDA) and 756–781 (AKTI…YGNG). Residues 789–981 (RRRMSMLGSR…TVSVKQGLPA (193 aa)) enclose the TH1 domain. Disordered stretches follow at residues 964-1154 (NGDH…PTLV) and 1209-1316 (DYLK…DDDW). 2 stretches are compositionally biased toward polar residues: residues 971-984 (GTVS…ASSK) and 1018-1030 (PRYN…ANSG). Low complexity predominate over residues 1042 to 1065 (QPQQYQPQQSQQQTPYPTQSSIPS). Residues 1097-1106 (SPTQQRQTPA) are compositionally biased toward polar residues. Residues 1117–1129 (ASTTIATTTSHTS) are compositionally biased toward low complexity. Residues 1137 to 1153 (PAPPVKKTAPPPPPPTL) are compositionally biased toward pro residues. The 61-residue stretch at 1156–1216 (PKFPTYKAMF…PIDYLKECSP (61 aa)) folds into the SH3 domain. Residues 1223-1232 (APPPPPPPPA) show a composition bias toward pro residues. Residues 1233-1268 (ATASAGANGASNPISTTTSTNTTTSSHTTNATSNGS) show a composition bias toward low complexity. Positions 1305-1316 (SDDEEEEDDDDW) are enriched in acidic residues.

Belongs to the TRAFAC class myosin-kinesin ATPase superfamily. Myosin family. Phosphorylation of the TEDS site (Ser-366) is required for the polarization of the actin cytoskeleton. Phosphorylation probably activates the myosin-I ATPase activity.

The protein localises to the cytoplasm. Its subcellular location is the cytoskeleton. The protein resides in the actin patch. Type-I myosin implicated in the organization of the actin cytoskeleton. Required for proper actin cytoskeleton polarization and for the internalization step in endocytosis. At the cell cortex, assembles in patch-like structures together with proteins from the actin-polymerizing machinery and promotes actin assembly. Functions as actin nucleation-promoting factor (NPF) for the Arp2/3 complex. Plays a role in chitin deposition in the cell wall, in determination of the budding pattern, and is required for hyphae formation. In Candida albicans (strain SC5314 / ATCC MYA-2876) (Yeast), this protein is Myosin-5 (MYO5).